The chain runs to 126 residues: Fluoride-specific ion channel FluC (126 aa).

4 helical membrane-spanning segments follow: residues 3 to 23 (PLGFVAVGIGAAVGAWLRWGL), 36 to 56 (YGTLAANLLGGYLIGLAVGFF), 68 to 88 (LLAITGFLGGLTTFSTFSSEA), and 99 to 119 (WALLHLLSHLGGSLLFAALGL). Residues Gly-76 and Thr-79 each contribute to the Na(+) site.

It belongs to the fluoride channel Fluc/FEX (TC 1.A.43) family.

Its subcellular location is the cell inner membrane. The catalysed reaction is fluoride(in) = fluoride(out). Its activity is regulated as follows. Na(+) is not transported, but it plays an essential structural role and its presence is essential for fluoride channel function. Its function is as follows. Fluoride-specific ion channel. Important for reducing fluoride concentration in the cell, thus reducing its toxicity. In Cupriavidus pinatubonensis (strain JMP 134 / LMG 1197) (Cupriavidus necator (strain JMP 134)), this protein is Fluoride-specific ion channel FluC.